The following is a 678-amino-acid chain: uncharacterized protein (678 aa).

This is an uncharacterized protein from Ostreid herpesvirus 1 (isolate France) (OsHV-1).